The following is a 195-amino-acid chain: dTTP/UTP pyrophosphatase (195 aa).

Aspartate 73 (proton acceptor) is an active-site residue.

The protein belongs to the Maf family. YhdE subfamily. Requires a divalent metal cation as cofactor.

It localises to the cytoplasm. It carries out the reaction dTTP + H2O = dTMP + diphosphate + H(+). It catalyses the reaction UTP + H2O = UMP + diphosphate + H(+). In terms of biological role, nucleoside triphosphate pyrophosphatase that hydrolyzes dTTP and UTP. May have a dual role in cell division arrest and in preventing the incorporation of modified nucleotides into cellular nucleic acids. This chain is dTTP/UTP pyrophosphatase, found in Deinococcus radiodurans (strain ATCC 13939 / DSM 20539 / JCM 16871 / CCUG 27074 / LMG 4051 / NBRC 15346 / NCIMB 9279 / VKM B-1422 / R1).